Reading from the N-terminus, the 631-residue chain is Mini-chromosome maintenance complex-binding protein (631 aa).

Polar residues-rich tracts occupy residues 148 to 157 (ARVVPSTSYV) and 173 to 192 (TQCQQTKDISQGAQSSSESH). Residues 148 to 218 (ARVVPSTSYV…SSSSHCTSSL (71 aa)) are disordered. Basic and acidic residues predominate over residues 193–202 (GNTEPKRQET). The span at 206-217 (SQDSSSSHCTSS) shows a compositional bias: low complexity.

The protein belongs to the MCMBP family. In terms of assembly, interacts with the mcm complex: associates with the mcm3-7 complex which lacks mcm2, while it does not interact with the mcm complex when mcm2 is present (mcm2-7 complex).

The protein resides in the nucleus. In terms of biological role, associated component of the mcm complex that acts as a regulator of DNA replication. Binds to the MCM complex during late S phase and promotes the disassembly of the mcm complex from chromatin, thereby acting as a key regulator of pre-replication complex (pre-RC) unloading from replicated DNA. Can dissociate the mcm complex without addition of ATP; probably acts by destabilizing interactions of each individual subunits of the mcm complex. Required for sister chromatid cohesion. This chain is Mini-chromosome maintenance complex-binding protein (mcmbp), found in Danio rerio (Zebrafish).